Reading from the N-terminus, the 208-residue chain is dITP/XTP pyrophosphatase (208 aa).

16–21 is a substrate binding site; it reads SNNKGK. Residue aspartate 79 is the Proton acceptor of the active site. Aspartate 79 is a binding site for Mg(2+). Residues serine 80, 166–169, lysine 189, and 194–195 each bind substrate; these read FGYD and HR.

It belongs to the HAM1 NTPase family. Homodimer. Requires Mg(2+) as cofactor.

The catalysed reaction is XTP + H2O = XMP + diphosphate + H(+). It carries out the reaction dITP + H2O = dIMP + diphosphate + H(+). The enzyme catalyses ITP + H2O = IMP + diphosphate + H(+). Pyrophosphatase that catalyzes the hydrolysis of nucleoside triphosphates to their monophosphate derivatives, with a high preference for the non-canonical purine nucleotides XTP (xanthosine triphosphate), dITP (deoxyinosine triphosphate) and ITP. Seems to function as a house-cleaning enzyme that removes non-canonical purine nucleotides from the nucleotide pool, thus preventing their incorporation into DNA/RNA and avoiding chromosomal lesions. This is dITP/XTP pyrophosphatase from Acinetobacter baumannii (strain ACICU).